The following is a 305-amino-acid chain: uncharacterized protein (305 aa).

The ABC transporter domain occupies 5-233 (LELKNVTKNI…ENDTYFFQVE (229 aa)). 37 to 44 (GPNGAGKT) lines the ATP pocket.

The protein belongs to the ABC transporter superfamily.

This is an uncharacterized protein from Bacillus subtilis (strain 168).